The sequence spans 747 residues: DNA repair and recombination protein RAD54-like (747 aa).

Residues 1–41 (MRRSLAPSQLAKRKPEGRSCDDEDWQPGLVTPRKRKSSSET) are disordered. A required for chromatin remodeling, strand pairing activities and coupling of ATPase activity region spans residues 2 to 9 (RRSLAPSQ). Ser-38 bears the Phosphoserine mark. The 176-residue stretch at 170–345 (SRRIPGSHGC…FSLVHFVNSG (176 aa)) folds into the Helicase ATP-binding domain. 183–190 (DEMGLGKT) lines the ATP pocket. A DEGH box motif is present at residues 296–299 (DEGH). In terms of domain architecture, Helicase C-terminal spans 500–653 (VLDYILAVTR…CVVDEEQDVE (154 aa)). Lys-515 carries the post-translational modification N6-acetyllysine. At Ser-572 the chain carries Phosphoserine; by NEK1.

This sequence belongs to the SNF2/RAD54 helicase family. Homohexamer. Interacts (via N-terminus) with RAD51. Interacts with NAP1L1. Interacts with BRD9; this interaction orchestrates RAD51-RAD54 complex formation. In terms of processing, acetylated. Acetylation promotes interaction with BRD9, and subsequently with RAD54, which is essential for homologous recombination (HR). Phosphorylated. Phosphorylation at Ser-572 by NEK1 specifically in G2 phase allows efficient removal of RAD51 filaments from DNA.

It localises to the nucleus. It carries out the reaction ATP + H2O = ADP + phosphate + H(+). Functionally, plays an essential role in homologous recombination (HR) which is a major pathway for repairing DNA double-strand breaks (DSBs), single-stranded DNA (ssDNA) gaps, and stalled or collapsed replication forks. Acts as a molecular motor during the homology search and guides RAD51 ssDNA along a donor dsDNA thereby changing the homology search from the diffusion-based mechanism to a motor-guided mechanism. Also plays an essential role in RAD51-mediated synaptic complex formation which consists of three strands encased in a protein filament formed once homology is recognized. Once DNA strand exchange occured, dissociates RAD51 from nucleoprotein filaments formed on dsDNA. This chain is DNA repair and recombination protein RAD54-like (RAD54L), found in Homo sapiens (Human).